Here is a 406-residue protein sequence, read N- to C-terminus: Phosphopentomutase (406 aa).

Mn(2+) contacts are provided by aspartate 10, aspartate 305, histidine 310, aspartate 346, histidine 347, and histidine 358.

Belongs to the phosphopentomutase family. Mn(2+) is required as a cofactor.

It localises to the cytoplasm. The enzyme catalyses 2-deoxy-alpha-D-ribose 1-phosphate = 2-deoxy-D-ribose 5-phosphate. It carries out the reaction alpha-D-ribose 1-phosphate = D-ribose 5-phosphate. It functions in the pathway carbohydrate degradation; 2-deoxy-D-ribose 1-phosphate degradation; D-glyceraldehyde 3-phosphate and acetaldehyde from 2-deoxy-alpha-D-ribose 1-phosphate: step 1/2. In terms of biological role, isomerase that catalyzes the conversion of deoxy-ribose 1-phosphate (dRib-1-P) and ribose 1-phosphate (Rib-1-P) to deoxy-ribose 5-phosphate (dRib-5-P) and ribose 5-phosphate (Rib-5-P), respectively. The chain is Phosphopentomutase from Sinorhizobium fredii (strain NBRC 101917 / NGR234).